Consider the following 637-residue polypeptide: Chaperone protein HtpG (637 aa).

The tract at residues 1 to 348 (MAEAGQMEKH…SNDLPLNVSR (348 aa)) is a; substrate-binding. The segment at 349–565 (EILQDNKITR…DNDMSTQMAK (217 aa)) is b. The interval 566–637 (LMEAAGQAVP…TRLNKLMLNA (72 aa)) is c.

Belongs to the heat shock protein 90 family. In terms of assembly, homodimer.

Its subcellular location is the cytoplasm. Molecular chaperone. Has ATPase activity. The chain is Chaperone protein HtpG from Idiomarina loihiensis (strain ATCC BAA-735 / DSM 15497 / L2-TR).